The sequence spans 293 residues: Phosphatidate cytidylyltransferase (293 aa).

The next 8 helical transmembrane spans lie at 6–26 (IISAVIGIALAFSLLILGGWY), 51–71 (IAPAAKTTMVLSLMLLLSATV), 73–93 (PHLTDAFFPLTGALICFYLLF), 97–117 (MATIADISTSLLGLFYGGYLP), 157–177 (LLVTILAFACIWAADIGAYIM), 195–215 (VEGSLWGVGGSLLVGVLGAWY), 218–238 (WPYWEITGALLGLLIGIVSLL), and 273–293 (VFTAPLVYYFVVLLLPVLNNL).

It belongs to the CDS family.

It localises to the cell membrane. The enzyme catalyses a 1,2-diacyl-sn-glycero-3-phosphate + CTP + H(+) = a CDP-1,2-diacyl-sn-glycerol + diphosphate. Its pathway is phospholipid metabolism; CDP-diacylglycerol biosynthesis; CDP-diacylglycerol from sn-glycerol 3-phosphate: step 3/3. The polypeptide is Phosphatidate cytidylyltransferase (cdsA) (Synechocystis sp. (strain ATCC 27184 / PCC 6803 / Kazusa)).